Consider the following 308-residue polypeptide: PHO85 cyclin-2 (308 aa).

Residues 18–146 form the Cyclin N-terminal domain; that stretch reads EMVQYLASTT…LLEYFDWDVT (129 aa). The interval 248 to 270 is disordered; that stretch reads SPRTYNIDSKHDNKENRPIPTIK. The span at 255–264 shows a compositional bias: basic and acidic residues; sequence DSKHDNKENR.

Belongs to the cyclin family. PCL1,2 subfamily. Forms a cyclin-CDK complex with PHO85. Interacts with RVS167.

The protein localises to the cytoplasm. It localises to the nucleus. Its function is as follows. G1/S-specific cyclin partner of the cyclin-dependent kinase (CDK) PHO85. Essential for the control of the cell cycle at the G1/S (start) transition. Together with cyclin PCL1, positively controls degradation of sphingoid long chain base kinase LCB4. The PCL2-PHO85 cyclin-CDK holoenzyme phosphorylates LCB4, which is required for its ubiquitination and degradation. PCL2-PHO85 also phosphorylates RVS167, linking cyclin-CDK activity with organization of the actin cytoskeleton. In Saccharomyces cerevisiae (strain ATCC 204508 / S288c) (Baker's yeast), this protein is PHO85 cyclin-2 (PCL2).